The chain runs to 387 residues: Formate-dependent phosphoribosylglycinamide formyltransferase (387 aa).

N(1)-(5-phospho-beta-D-ribosyl)glycinamide-binding positions include 21 to 22 (EL) and glutamate 81. ATP-binding positions include arginine 113, lysine 154, 159-164 (SSGHGQ), 193-196 (EEFI), and glutamate 201. One can recognise an ATP-grasp domain in the interval 118-306 (TFAAEEVGVK…EFALHLRAVL (189 aa)). Positions 265 and 277 each coordinate Mg(2+). Residues aspartate 284, lysine 352, and 359–360 (RR) contribute to the N(1)-(5-phospho-beta-D-ribosyl)glycinamide site.

This sequence belongs to the PurK/PurT family. In terms of assembly, homodimer.

The enzyme catalyses N(1)-(5-phospho-beta-D-ribosyl)glycinamide + formate + ATP = N(2)-formyl-N(1)-(5-phospho-beta-D-ribosyl)glycinamide + ADP + phosphate + H(+). It participates in purine metabolism; IMP biosynthesis via de novo pathway; N(2)-formyl-N(1)-(5-phospho-D-ribosyl)glycinamide from N(1)-(5-phospho-D-ribosyl)glycinamide (formate route): step 1/1. Involved in the de novo purine biosynthesis. Catalyzes the transfer of formate to 5-phospho-ribosyl-glycinamide (GAR), producing 5-phospho-ribosyl-N-formylglycinamide (FGAR). Formate is provided by PurU via hydrolysis of 10-formyl-tetrahydrofolate. The protein is Formate-dependent phosphoribosylglycinamide formyltransferase of Wolinella succinogenes (strain ATCC 29543 / DSM 1740 / CCUG 13145 / JCM 31913 / LMG 7466 / NCTC 11488 / FDC 602W) (Vibrio succinogenes).